A 61-amino-acid chain; its full sequence is Metallothionein-1 (61 aa).

Residue M1 is modified to N-acetylmethionine. A beta region spans residues 1 to 29 (MDPNCSCPTGGSCTCAGSCKCKACRCPSC). A divalent metal cation is bound by residues C5, C7, C13, C15, C19, C21, C24, C26, C29, C33, C34, C36, C37, C41, C44, C48, C50, C57, C59, and C60. Positions 30–61 (KKSCCSCCPVGCAKCAQGCVCKGASDKCSCCA) are alpha.

Belongs to the metallothionein superfamily. Type 1 family. In terms of assembly, monomer.

Functionally, metallothioneins have a high content of cysteine residues that bind various heavy metals; these proteins are transcriptionally regulated by both heavy metals and glucocorticoids. This is Metallothionein-1 (MT1) from Bos taurus (Bovine).